The primary structure comprises 221 residues: Lectin L6 (221 aa).

A run of 6 repeats spans residues 1–38, 39–75, 76–113, 114–150, 151–188, and 189–221. Residues 1 to 221 form a 6 X approximate tandem repeats region; it reads VQWHQIPGKL…NSVDNIYRSG (221 aa). Cys-32 and Cys-36 are disulfide-bonded. Cys-108 and Cys-112 are oxidised to a cystine. A disulfide bridge links Cys-183 with Cys-187.

This sequence belongs to the tectonin family. As to expression, hemocytes.

The protein resides in the cytoplasmic vesicle. It localises to the secretory vesicle. Functionally, lipopolysaccharide-binding protein with Gram-negative antibacterial activity. Binds zinc and calcium. This chain is Lectin L6, found in Tachypleus tridentatus (Japanese horseshoe crab).